A 115-amino-acid chain; its full sequence is NADH-ubiquinone oxidoreductase chain 3 (115 aa).

The next 3 membrane-spanning stretches (helical) occupy residues 3–23 (LILT…IAFW), 55–75 (FFLV…LLPL), and 86–106 (TMLT…AYEW).

Belongs to the complex I subunit 3 family. Core subunit of respiratory chain NADH dehydrogenase (Complex I) which is composed of 45 different subunits. Interacts with TMEM186. Interacts with TMEM242.

It is found in the mitochondrion inner membrane. It carries out the reaction a ubiquinone + NADH + 5 H(+)(in) = a ubiquinol + NAD(+) + 4 H(+)(out). Core subunit of the mitochondrial membrane respiratory chain NADH dehydrogenase (Complex I) which catalyzes electron transfer from NADH through the respiratory chain, using ubiquinone as an electron acceptor. Essential for the catalytic activity of complex I. In Rhinoceros unicornis (Greater Indian rhinoceros), this protein is NADH-ubiquinone oxidoreductase chain 3.